Here is a 183-residue protein sequence, read N- to C-terminus: MSSAGRIVATRILGLDPGLRITGFGVIDTLGSQLRYVASGCIKTRDGELPGRLKTLLDGVREVIATYQPDAVAVEKVFVNVNPQSTLLLGQARGAVICGAVSCDLPVAEYTALQVKQSVVGYGKAAKEQVQHMVQRLLALDASPGPDAADALACAICHAHGGQGLGGQAGIGGRRRAGRILSL.

Active-site residues include Asp-16, Glu-75, and Asp-147. Mg(2+)-binding residues include Asp-16, Glu-75, and Asp-147.

The protein belongs to the RuvC family. Homodimer which binds Holliday junction (HJ) DNA. The HJ becomes 2-fold symmetrical on binding to RuvC with unstacked arms; it has a different conformation from HJ DNA in complex with RuvA. In the full resolvosome a probable DNA-RuvA(4)-RuvB(12)-RuvC(2) complex forms which resolves the HJ. The cofactor is Mg(2+).

It is found in the cytoplasm. The enzyme catalyses Endonucleolytic cleavage at a junction such as a reciprocal single-stranded crossover between two homologous DNA duplexes (Holliday junction).. Its function is as follows. The RuvA-RuvB-RuvC complex processes Holliday junction (HJ) DNA during genetic recombination and DNA repair. Endonuclease that resolves HJ intermediates. Cleaves cruciform DNA by making single-stranded nicks across the HJ at symmetrical positions within the homologous arms, yielding a 5'-phosphate and a 3'-hydroxyl group; requires a central core of homology in the junction. The consensus cleavage sequence is 5'-(A/T)TT(C/G)-3'. Cleavage occurs on the 3'-side of the TT dinucleotide at the point of strand exchange. HJ branch migration catalyzed by RuvA-RuvB allows RuvC to scan DNA until it finds its consensus sequence, where it cleaves and resolves the cruciform DNA. This is Crossover junction endodeoxyribonuclease RuvC from Azoarcus sp. (strain BH72).